Here is a 142-residue protein sequence, read N- to C-terminus: Universal stress protein G (142 aa).

The protein belongs to the universal stress protein A family.

The sequence is that of Universal stress protein G (uspG) from Escherichia coli O157:H7.